Reading from the N-terminus, the 323-residue chain is Elongation factor P--(R)-beta-lysine ligase (323 aa).

Residue 76–78 coordinates substrate; it reads SPE. Residues 100-102 and N109 each bind ATP; that span reads RNE. Y118 contributes to the substrate binding site. Residue 242 to 243 participates in ATP binding; that stretch reads EL. Residue E249 coordinates substrate. ATP is bound at residue G298.

This sequence belongs to the class-II aminoacyl-tRNA synthetase family. EpmA subfamily. In terms of assembly, homodimer.

The catalysed reaction is D-beta-lysine + L-lysyl-[protein] + ATP = N(6)-((3R)-3,6-diaminohexanoyl)-L-lysyl-[protein] + AMP + diphosphate + H(+). With EpmB is involved in the beta-lysylation step of the post-translational modification of translation elongation factor P (EF-P). Catalyzes the ATP-dependent activation of (R)-beta-lysine produced by EpmB, forming a lysyl-adenylate, from which the beta-lysyl moiety is then transferred to the epsilon-amino group of a conserved specific lysine residue in EF-P. The chain is Elongation factor P--(R)-beta-lysine ligase from Pasteurella multocida (strain Pm70).